The following is a 229-amino-acid chain: Putative germin-like protein 12-4 (229 aa).

The signal sequence occupies residues 1-22; that stretch reads MAASNFFLLTAFIALVATQAMA. An intrachain disulfide couples C32 to C47. The Cupin type-1 domain maps to 62 to 217; that stretch reads ANLDKPMDTT…AFQVDKKAMD (156 aa). N78 carries an N-linked (GlcNAc...) asparagine glycan. Positions 111, 113, 118, and 162 each coordinate Mn(2+).

Belongs to the germin family. As to quaternary structure, oligomer (believed to be a pentamer but probably hexamer).

Its subcellular location is the secreted. It is found in the extracellular space. It localises to the apoplast. May play a role in plant defense. Probably has no oxalate oxidase activity even if the active site is conserved. This chain is Putative germin-like protein 12-4, found in Oryza sativa subsp. japonica (Rice).